A 171-amino-acid polypeptide reads, in one-letter code: 3-hydroxydecanoyl-[acyl-carrier-protein] dehydratase (171 aa).

Residue histidine 71 is part of the active site.

Belongs to the thioester dehydratase family. FabA subfamily. Homodimer.

It is found in the cytoplasm. The enzyme catalyses a (3R)-hydroxyacyl-[ACP] = a (2E)-enoyl-[ACP] + H2O. The catalysed reaction is (3R)-hydroxydecanoyl-[ACP] = (2E)-decenoyl-[ACP] + H2O. It catalyses the reaction (2E)-decenoyl-[ACP] = (3Z)-decenoyl-[ACP]. Its pathway is lipid metabolism; fatty acid biosynthesis. In terms of biological role, necessary for the introduction of cis unsaturation into fatty acids. Catalyzes the dehydration of (3R)-3-hydroxydecanoyl-ACP to E-(2)-decenoyl-ACP and then its isomerization to Z-(3)-decenoyl-ACP. Can catalyze the dehydratase reaction for beta-hydroxyacyl-ACPs with saturated chain lengths up to 16:0, being most active on intermediate chain length. This Sinorhizobium fredii (strain NBRC 101917 / NGR234) protein is 3-hydroxydecanoyl-[acyl-carrier-protein] dehydratase.